The sequence spans 435 residues: Nuclear hormone receptor family member nhr-28 (435 aa).

Positions 5 to 80 (KKPCSVCGEA…VGMRKSAVQR (76 aa)) form a DNA-binding region, nuclear receptor. 2 consecutive NR C4-type zinc fingers follow at residues 8-28 (CSVC…CRAC) and 44-63 (CRAM…CRAC). Residues 84–106 (LFGRQDSSDGSNPRVSPSTSWPM) form a disordered region. Residues 91 to 104 (SDGSNPRVSPSTSW) are compositionally biased toward polar residues. The 262-residue stretch at 113 to 374 (IEEPGMATLN…ETFYELVSGR (262 aa)) folds into the NR LBD domain.

The protein belongs to the nuclear hormone receptor family.

The protein resides in the nucleus. Orphan nuclear receptor. The polypeptide is Nuclear hormone receptor family member nhr-28 (Caenorhabditis briggsae).